A 314-amino-acid chain; its full sequence is Ribosomal RNA small subunit methyltransferase H (314 aa).

S-adenosyl-L-methionine is bound by residues 34 to 36, Asp53, Phe82, Asp103, and Gln110; that span reads GGH.

Belongs to the methyltransferase superfamily. RsmH family.

The protein resides in the cytoplasm. The enzyme catalyses cytidine(1402) in 16S rRNA + S-adenosyl-L-methionine = N(4)-methylcytidine(1402) in 16S rRNA + S-adenosyl-L-homocysteine + H(+). Functionally, specifically methylates the N4 position of cytidine in position 1402 (C1402) of 16S rRNA. The chain is Ribosomal RNA small subunit methyltransferase H from Limosilactobacillus fermentum (strain NBRC 3956 / LMG 18251) (Lactobacillus fermentum).